We begin with the raw amino-acid sequence, 901 residues long: Protein translocase subunit SecA (901 aa).

ATP contacts are provided by residues glutamine 87, 105 to 109, and aspartate 512; that span reads GEGKT. Residues 859 to 901 form a disordered region; that stretch reads HQDDDSAAAAALAAQTGERKVGRNDPCPCGSGKKYKQCHGRLQ. Residues cysteine 885, cysteine 887, cysteine 896, and histidine 897 each coordinate Zn(2+). Basic residues predominate over residues 891-901; that stretch reads KKYKQCHGRLQ.

It belongs to the SecA family. In terms of assembly, monomer and homodimer. Part of the essential Sec protein translocation apparatus which comprises SecA, SecYEG and auxiliary proteins SecDF-YajC and YidC. Requires Zn(2+) as cofactor.

Its subcellular location is the cell inner membrane. The protein resides in the cytoplasm. The enzyme catalyses ATP + H2O + cellular proteinSide 1 = ADP + phosphate + cellular proteinSide 2.. Its function is as follows. Part of the Sec protein translocase complex. Interacts with the SecYEG preprotein conducting channel. Has a central role in coupling the hydrolysis of ATP to the transfer of proteins into and across the cell membrane, serving both as a receptor for the preprotein-SecB complex and as an ATP-driven molecular motor driving the stepwise translocation of polypeptide chains across the membrane. The polypeptide is Protein translocase subunit SecA (Escherichia coli (strain 55989 / EAEC)).